The primary structure comprises 116 residues: Large ribosomal subunit protein bL20 (116 aa).

The protein belongs to the bacterial ribosomal protein bL20 family.

In terms of biological role, binds directly to 23S ribosomal RNA and is necessary for the in vitro assembly process of the 50S ribosomal subunit. It is not involved in the protein synthesizing functions of that subunit. This chain is Large ribosomal subunit protein bL20, found in Fusobacterium nucleatum subsp. nucleatum (strain ATCC 25586 / DSM 15643 / BCRC 10681 / CIP 101130 / JCM 8532 / KCTC 2640 / LMG 13131 / VPI 4355).